The sequence spans 308 residues: Shikimate kinase 1, chloroplastic (308 aa).

The N-terminal 62 residues, 1 to 62, are a transit peptide targeting the chloroplast; the sequence is MEAGVGLALQ…RGSKPVAPLR (62 aa). 103 to 110 lines the ATP pocket; sequence GMMGSGKS. Ser110 is a binding site for Mg(2+). Residues Asp128, Arg153, and Gly175 each contribute to the substrate site. Arg214 serves as a coordination point for ATP.

It belongs to the shikimate kinase family. Mg(2+) is required as a cofactor. In terms of tissue distribution, expressed in panicles.

The protein resides in the plastid. It localises to the chloroplast. It carries out the reaction shikimate + ATP = 3-phosphoshikimate + ADP + H(+). It participates in metabolic intermediate biosynthesis; chorismate biosynthesis; chorismate from D-erythrose 4-phosphate and phosphoenolpyruvate: step 5/7. Catalyzes the specific phosphorylation of the 3-hydroxyl group of shikimic acid using ATP as a cosubstrate. This chain is Shikimate kinase 1, chloroplastic (SK1), found in Oryza sativa subsp. japonica (Rice).